The chain runs to 202 residues: Small ribosomal subunit protein uS4c (202 aa).

Residues 89-152 (MRLDNIIFRL…QSNTFINNCI (64 aa)) enclose the S4 RNA-binding domain.

The protein belongs to the universal ribosomal protein uS4 family. As to quaternary structure, part of the 30S ribosomal subunit. Contacts protein S5. The interaction surface between S4 and S5 is involved in control of translational fidelity.

It localises to the plastid. Functionally, one of the primary rRNA binding proteins, it binds directly to 16S rRNA where it nucleates assembly of the body of the 30S subunit. Its function is as follows. With S5 and S12 plays an important role in translational accuracy. The protein is Small ribosomal subunit protein uS4c (rps4) of Epifagus virginiana (Beechdrops).